The following is a 1649-amino-acid chain: PHD and RING finger domain-containing protein 1 (1649 aa).

The disordered stretch occupies residues 1 to 79; that stretch reads MDDDSLDELV…RSGSEDSEDD (79 aa). Residue Ser-5 is modified to Phosphoserine. Residues 54-79 show a composition bias toward acidic residues; that stretch reads TDGEDEGASEEEDLEDRSGSEDSEDD. The RING-type; degenerate zinc-finger motif lies at 108–149; the sequence is CPICLNAFRDQAVGTPENCAHYFCLDCIVEWSKNANSCPVDR. The segment at 183 to 233 adopts a PHD-type zinc-finger fold; sequence PTFCEVCGRSDREDRLLLCDGCDAGYHMECLDPPLQEVPVDEWFCPECAAP. Positions 324–398 are disordered; it reads VYQRPLTPRT…TRSRIARTLG (75 aa). Thr-330 carries the post-translational modification Phosphothreonine. The segment covering 334 to 353 has biased composition (basic residues); it reads PARRKRKTRRRKKVPGRKKT. The segment covering 354–366 has biased composition (low complexity); it reads PSGPSAKSKSSAT. A compositionally biased stretch (basic residues) spans 367–382; that stretch reads RSKKRQHRVKKRRGKK. A phosphoserine mark is found at Ser-445 and Ser-455. Disordered regions lie at residues 534 to 600, 644 to 871, 888 to 1240, and 1281 to 1395; these read KRAA…GAPV, SAAS…PKAQ, FGTE…KAPL, and IQLD…PLLR. Residues 568 to 589 show a composition bias toward polar residues; it reads SPAQGPSGNRPQSTGLSCQGRS. Basic and acidic residues-rich tracts occupy residues 685 to 697 and 727 to 742; these read IRRD…RDAA and TRAE…REPG. Over residues 786 to 796 the composition is skewed to polar residues; that stretch reads AHSSQLSSPGF. A compositionally biased stretch (basic and acidic residues) spans 802-812; that stretch reads PVDDKEQRKEN. 6 positions are modified to phosphoserine: Ser-814, Ser-845, Ser-846, Ser-864, Ser-867, and Ser-915. 2 stretches are compositionally biased toward polar residues: residues 835-848 and 859-871; these read PTGS…SSPE and ITRT…PKAQ. Thr-917 is subject to Phosphothreonine. Ser-936, Ser-973, and Ser-991 each carry phosphoserine. Residues 988–999 are compositionally biased toward low complexity; the sequence is RPPSRSRSTSSS. A compositionally biased stretch (basic residues) spans 1000-1011; that stretch reads RSRKKAKRKRVS. A compositionally biased stretch (basic and acidic residues) spans 1012–1030; sequence REHGRTRSGTRSESRDRSS. Residues 1043–1053 show a composition bias toward basic residues; that stretch reads RRQRSKAKSRR. Residues 1054–1063 show a composition bias toward basic and acidic residues; that stretch reads SSSDRSSSRE. The segment covering 1064-1090 has biased composition (basic residues); it reads RAKRKKAKDKSREHRRGPWGHSRRTSR. A compositionally biased stretch (low complexity) spans 1091–1101; that stretch reads SRSGSPGSSSY. A compositionally biased stretch (basic residues) spans 1106–1118; the sequence is SRKKKKRRSASRP. 2 positions are modified to phosphoserine: Ser-1124 and Ser-1128. Composition is skewed to basic and acidic residues over residues 1141-1151 and 1181-1198; these read RSHERPDRKES and REKW…KGAV. A phosphoserine mark is found at Ser-1202 and Ser-1229. Residues 1284 to 1297 show a composition bias toward low complexity; that stretch reads DDMSSPPSPESTDS. Residues 1345 to 1356 show a composition bias toward basic and acidic residues; sequence HLLRPDAAEKAE. Phosphoserine occurs at positions 1359, 1360, and 1371. A Phosphothreonine modification is found at Thr-1404. Disordered stretches follow at residues 1407-1439, 1455-1486, 1526-1556, and 1630-1649; these read LQES…WDME, FPSH…AQPS, TPAS…EKTK, and MRRH…GAEG. Residues 1531 to 1540 are compositionally biased toward polar residues; sequence PASQATAASN. Residues 1541–1556 show a composition bias toward basic and acidic residues; the sequence is SEEKTPAPRLAAEKTK. A coiled-coil region spans residues 1549 to 1579; sequence RLAAEKTKKEEYMKKLHMQERAVEEVKLAIK.

As to quaternary structure, interacts with POLR2A (via the C-terminal domain).

This chain is PHD and RING finger domain-containing protein 1 (PHRF1), found in Homo sapiens (Human).